A 107-amino-acid chain; its full sequence is UPF0102 protein CTN_0433 (107 aa).

Belongs to the UPF0102 family.

This chain is UPF0102 protein CTN_0433, found in Thermotoga neapolitana (strain ATCC 49049 / DSM 4359 / NBRC 107923 / NS-E).